A 325-amino-acid chain; its full sequence is Glutarate 2-hydroxylase (325 aa).

Fe cation contacts are provided by histidine 160, aspartate 162, and histidine 292.

This sequence belongs to the glutarate hydroxylase family. Homotetramer. It depends on Fe(2+) as a cofactor.

The enzyme catalyses glutarate + 2-oxoglutarate + O2 = (S)-2-hydroxyglutarate + succinate + CO2. It participates in amino-acid degradation. Functionally, acts as an alpha-ketoglutarate-dependent dioxygenase catalyzing hydroxylation of glutarate (GA) to L-2-hydroxyglutarate (L2HG). Functions in a L-lysine degradation pathway that proceeds via cadaverine, glutarate and L-2-hydroxyglutarate. The sequence is that of Glutarate 2-hydroxylase from Escherichia coli (strain UTI89 / UPEC).